The chain runs to 297 residues: MAKSSWEGNCFLNFFNNKSSSGKDDKTIFKSKFTSPYKLLKCSYDQEGRCILPILHTAGGLVGGDLLEFEANIGINSKVLLTTSSAQKVYGSVGRSKINPEGTFSSQKTKISILDNSHLEYLPQETIVFANGLYSQEFNIKISDNSSFLFTDLIRLGRSSAGESIESGVFRSKLEIMRNGNLCDDWEFVDQIELTKFSFEAKSGMDFKPVFGSLIWICEKEFPITKISYLKEKIKIIFKENNNYLSLGTLENGLSIRFLGTSSQDARKCFFSIWTQIRTVCGFCKPEYQGVWPLQDL.

The protein belongs to the UreD family. As to quaternary structure, ureD, UreF and UreG form a complex that acts as a GTP-hydrolysis-dependent molecular chaperone, activating the urease apoprotein by helping to assemble the nickel containing metallocenter of UreC. The UreE protein probably delivers the nickel.

The protein localises to the cytoplasm. Required for maturation of urease via the functional incorporation of the urease nickel metallocenter. The protein is Urease accessory protein UreD of Prochlorococcus marinus subsp. pastoris (strain CCMP1986 / NIES-2087 / MED4).